A 276-amino-acid chain; its full sequence is Diaminopimelate epimerase (276 aa).

Substrate contacts are provided by asparagine 13, glutamine 46, and asparagine 66. Residue cysteine 75 is the Proton donor of the active site. Substrate contacts are provided by residues 76–77 (GN), asparagine 159, asparagine 192, and 210–211 (ER). The active-site Proton acceptor is the cysteine 219. Substrate is bound at residue 220–221 (GS).

This sequence belongs to the diaminopimelate epimerase family. As to quaternary structure, homodimer.

Its subcellular location is the cytoplasm. The catalysed reaction is (2S,6S)-2,6-diaminopimelate = meso-2,6-diaminopimelate. The protein operates within amino-acid biosynthesis; L-lysine biosynthesis via DAP pathway; DL-2,6-diaminopimelate from LL-2,6-diaminopimelate: step 1/1. Its function is as follows. Catalyzes the stereoinversion of LL-2,6-diaminopimelate (L,L-DAP) to meso-diaminopimelate (meso-DAP), a precursor of L-lysine and an essential component of the bacterial peptidoglycan. The chain is Diaminopimelate epimerase from Coxiella burnetii (strain CbuK_Q154) (Coxiella burnetii (strain Q154)).